Reading from the N-terminus, the 318-residue chain is MLQHTSLVLLLASIWTTRHPVQGADLVQDLSISTCRIMGVALVGRNKNPQMNFTEANEACKMLGLTLASRDQVESAQKSGFETCSYGWVGEQFSVIPRIFSNPRCGKNGKGVLIWNAPSSQKFKAYCHNSSDTWVNSCIPEIVTTFYPVLDTQTPATEFSVSSSAYLASSPDSTTPVSATTRAPPLTSMARKTKKICITEVYTEPITMATETEAFVASGAAFKNEAAGFGGVPTALLVLALLFFGAAAVLAVCYVKRYVKAFPFTTKNQQKEMIETKVVKEEKADDVNANEESKKTIKNPEEAKSPPKTTVRCLEAEV.

The signal sequence occupies residues Met1–Gly23. Over Ala24–Thr234 the chain is Extracellular. The Link domain maps to Gly39–Asn129. N-linked (GlcNAc...) asparagine glycosylation occurs at Asn52. Disulfide bonds link Cys60–Cys127 and Cys84–Cys105. N-linked (GlcNAc...) asparagine glycosylation occurs at Asn129. Residues Ala235 to Val255 traverse the membrane as a helical segment. The Cytoplasmic portion of the chain corresponds to Lys256–Val318. Basic and acidic residues predominate over residues Ala284–Ser305. The segment at Ala284–Val318 is disordered.

As to quaternary structure, homodimer; disulfide-linked. Interacts with PDGFB and IGFBP3. Forms a transient ternary complex with PDGFB and PDGFRB in TGN. Post-translationally, O-glycosylated.

The protein localises to the membrane. In terms of biological role, ligand-specific transporter trafficking between intracellular organelles (TGN) and the plasma membrane. Plays a role in autocrine regulation of cell growth mediated by growth regulators containing cell surface retention sequence binding (CRS). May act as a hyaluronan (HA) transporter, either mediating its uptake for catabolism within lymphatic endothelial cells themselves, or its transport into the lumen of afferent lymphatic vessels for subsequent re-uptake and degradation in lymph nodes. Binds to pericelluar hyaluronan matrices deposited on the surface of leukocytes and facilitates cell adhesion and migration through lymphatic endothelium. In Mus musculus (Mouse), this protein is Lymphatic vessel endothelial hyaluronic acid receptor 1 (Lyve1).